The primary structure comprises 401 residues: Nicotinate phosphoribosyltransferase (401 aa).

At H224 the chain carries Phosphohistidine; by autocatalysis.

This sequence belongs to the NAPRTase family. In terms of processing, transiently phosphorylated on a His residue during the reaction cycle. Phosphorylation strongly increases the affinity for substrates and increases the rate of nicotinate D-ribonucleotide production. Dephosphorylation regenerates the low-affinity form of the enzyme, leading to product release.

The catalysed reaction is nicotinate + 5-phospho-alpha-D-ribose 1-diphosphate + ATP + H2O = nicotinate beta-D-ribonucleotide + ADP + phosphate + diphosphate. Its pathway is cofactor biosynthesis; NAD(+) biosynthesis; nicotinate D-ribonucleotide from nicotinate: step 1/1. Catalyzes the synthesis of beta-nicotinate D-ribonucleotide from nicotinate and 5-phospho-D-ribose 1-phosphate at the expense of ATP. This is Nicotinate phosphoribosyltransferase from Pseudomonas putida (strain ATCC 700007 / DSM 6899 / JCM 31910 / BCRC 17059 / LMG 24140 / F1).